We begin with the raw amino-acid sequence, 214 residues long: Adenylate kinase (214 aa).

10–15 is a binding site for ATP; the sequence is GAGKGT. Residues 30–59 form an NMP region; the sequence is STGDMFRAAIKAGTELGKQAKALMDEGKLV. AMP-binding positions include Thr31, Arg36, 57 to 59, 85 to 88, and Gln92; these read KLV and GFPR. Positions 122–159 are LID; sequence GRRVHQASGRSYHIVYNPPKVEGKDDVTGEDLIIRADD. ATP contacts are provided by residues Arg123 and 132-133; that span reads SY. AMP is bound by residues Arg156 and Arg167. Gln200 is a binding site for ATP.

The protein belongs to the adenylate kinase family. In terms of assembly, monomer.

Its subcellular location is the cytoplasm. It catalyses the reaction AMP + ATP = 2 ADP. Its pathway is purine metabolism; AMP biosynthesis via salvage pathway; AMP from ADP: step 1/1. Functionally, catalyzes the reversible transfer of the terminal phosphate group between ATP and AMP. Plays an important role in cellular energy homeostasis and in adenine nucleotide metabolism. It may be linked to the biosynthesis of lipopolysaccharide surface molecules, which are important for the pathogenesis of H.influenzae. In Haemophilus influenzae (strain ATCC 51907 / DSM 11121 / KW20 / Rd), this protein is Adenylate kinase.